We begin with the raw amino-acid sequence, 72 residues long: Defensin 3 (72 aa).

Residues 1–25 form the signal peptide; the sequence is MEKKMAGFCIFFLVLFLAQEYGVEG. Disulfide bonds link Cys-28–Cys-72, Cys-39–Cys-60, and Cys-45–Cys-66.

Belongs to the DEFL family. As to quaternary structure, may form dimers. In terms of processing, not glycosylated. Has 4 disulfide bonds.

Functionally, probably has antifungal activity. The protein is Defensin 3 of Arachis hypogaea (Peanut).